The following is a 540-amino-acid chain: MAKDIKFSADARSSMVRGVDILANTVKVTLGPKGRNVVLEKSFGSPLITNDGVTIAKEIELEDHFENMGAKLVSEVASKTNDIAGDGTTTATVLTQAIVREGIKNVTAGANPIGIRRGIEAAVATAVEALKSNSVPVSNKEAIAQVAAVSSRSEKVGEYISEAMEKVGNDGVITIEESKGMETELDVVEGMQFDRGYLSQYMVTDNEKMVAELDNPYILITDKKISNIQEILPLLENILKTNRPLLIVADDVDGEALPTLVLNKIRGTFNVVAVKAPGFGDRRKAMLEDIAILTGGTVITDDLGLELKDATIEALGQASKVTVDKDSTVIVEGSGNPEAIANRVAVIKSQIESSTSEFDREKLQERLAKLSGGVAVIKVGAATETELKEMKLRIEDALNATRAAVEEGIVSGGGTAYINVLDAVAGLELAGDEGTGRNIVLRALEEPVRQIALNAGFEGSIVIDRLKNSEVGTGFNAATGEWVNMIEAGIIDPVKVTRSALQNAASVASLILTTEAVVANQPEPASPAPAMDPGMMGGMM.

Residues T29–P32, D86–T90, G413, N476–A478, and D492 contribute to the ATP site.

This sequence belongs to the chaperonin (HSP60) family. In terms of assembly, forms a cylinder of 14 subunits composed of two heptameric rings stacked back-to-back. Interacts with the co-chaperonin GroES.

Its subcellular location is the cytoplasm. It carries out the reaction ATP + H2O + a folded polypeptide = ADP + phosphate + an unfolded polypeptide.. Its function is as follows. Together with its co-chaperonin GroES, plays an essential role in assisting protein folding. The GroEL-GroES system forms a nano-cage that allows encapsulation of the non-native substrate proteins and provides a physical environment optimized to promote and accelerate protein folding. The sequence is that of Chaperonin GroEL from Streptococcus sanguinis.